We begin with the raw amino-acid sequence, 445 residues long: Bifunctional protein GlmU (445 aa).

A pyrophosphorylase region spans residues 1–218 (MRALVLAAGK…LLEITGVNTR (218 aa)). Residues 6 to 9 (LAAG), lysine 20, glutamine 69, 74 to 75 (GT), 96 to 98 (YGD), glycine 134, glutamate 147, asparagine 162, and asparagine 216 contribute to the UDP-N-acetyl-alpha-D-glucosamine site. Aspartate 98 provides a ligand contact to Mg(2+). Mg(2+) is bound at residue asparagine 216. Residues 219–239 (KTLVWLEEQLRMRKIEELLEN) are linker. An N-acetyltransferase region spans residues 240–445 (GVTILDPATT…GWVLKKRKEE (206 aa)). Residues arginine 321 and lysine 339 each contribute to the UDP-N-acetyl-alpha-D-glucosamine site. The active-site Proton acceptor is histidine 351. Residues tyrosine 354 and asparagine 365 each coordinate UDP-N-acetyl-alpha-D-glucosamine. Acetyl-CoA is bound by residues alanine 368, 374–375 (NY), serine 393, alanine 411, and arginine 428.

This sequence in the N-terminal section; belongs to the N-acetylglucosamine-1-phosphate uridyltransferase family. In the C-terminal section; belongs to the transferase hexapeptide repeat family. As to quaternary structure, homotrimer. Mg(2+) is required as a cofactor.

It is found in the cytoplasm. It catalyses the reaction alpha-D-glucosamine 1-phosphate + acetyl-CoA = N-acetyl-alpha-D-glucosamine 1-phosphate + CoA + H(+). The catalysed reaction is N-acetyl-alpha-D-glucosamine 1-phosphate + UTP + H(+) = UDP-N-acetyl-alpha-D-glucosamine + diphosphate. It participates in nucleotide-sugar biosynthesis; UDP-N-acetyl-alpha-D-glucosamine biosynthesis; N-acetyl-alpha-D-glucosamine 1-phosphate from alpha-D-glucosamine 6-phosphate (route II): step 2/2. It functions in the pathway nucleotide-sugar biosynthesis; UDP-N-acetyl-alpha-D-glucosamine biosynthesis; UDP-N-acetyl-alpha-D-glucosamine from N-acetyl-alpha-D-glucosamine 1-phosphate: step 1/1. Its pathway is bacterial outer membrane biogenesis; LPS lipid A biosynthesis. In terms of biological role, catalyzes the last two sequential reactions in the de novo biosynthetic pathway for UDP-N-acetylglucosamine (UDP-GlcNAc). The C-terminal domain catalyzes the transfer of acetyl group from acetyl coenzyme A to glucosamine-1-phosphate (GlcN-1-P) to produce N-acetylglucosamine-1-phosphate (GlcNAc-1-P), which is converted into UDP-GlcNAc by the transfer of uridine 5-monophosphate (from uridine 5-triphosphate), a reaction catalyzed by the N-terminal domain. In Thermotoga petrophila (strain ATCC BAA-488 / DSM 13995 / JCM 10881 / RKU-1), this protein is Bifunctional protein GlmU.